An 858-amino-acid polypeptide reads, in one-letter code: Phosphoenolpyruvate carboxylase (858 aa).

Residues histidine 145 and lysine 531 contribute to the active site.

This sequence belongs to the PEPCase type 1 family. Mg(2+) is required as a cofactor.

The enzyme catalyses oxaloacetate + phosphate = phosphoenolpyruvate + hydrogencarbonate. Functionally, forms oxaloacetate, a four-carbon dicarboxylic acid source for the tricarboxylic acid cycle. This is Phosphoenolpyruvate carboxylase from Thermus thermophilus (strain ATCC BAA-163 / DSM 7039 / HB27).